A 1968-amino-acid chain; its full sequence is Signal element on autosome protein 2 (1968 aa).

Residues 72-88 (TSSSFSSSLATTTTTSS) show a composition bias toward low complexity. 2 disordered regions span residues 72–252 (TSSS…TPTQ) and 271–364 (QVQQ…VQEQ). Residues 107-119 (SHHHPSSSHHHHP) are compositionally biased toward basic residues. Low complexity-rich tracts occupy residues 120-134 (GQQQSSSSSSSSHLQ), 144-165 (HPYYHQQQPQHQHQQAQQYGQA), 219-232 (DQPSSSTGSSLPPL), and 298-338 (LSSI…SSSS). The segment covering 346–362 (PNASSSSLIKRQSQDVQ) has biased composition (polar residues). The C2H2-type 1 zinc-finger motif lies at 413–440 (YQCPNCNRNLANARNLQRHRQTCGSAQH). Disordered regions lie at residues 451–499 (RSPP…LYSP) and 538–601 (WSRD…TLDP). The span at 452–467 (SPPPCASAPPVAPPTA) shows a compositional bias: pro residues. The span at 472 to 482 (FQHHNSTGNLT) shows a compositional bias: polar residues. Residues 483-498 (LSYSSSSSRHQSSLYS) are compositionally biased toward low complexity. Residues 570–594 (PLHHLDSFDSADHRKETPRECHEPD) are compositionally biased toward basic and acidic residues. A C2H2-type 2; degenerate zinc finger spans residues 651-672 (FTCEACKKSVSSERSLRRHYNT). 2 disordered regions span residues 681–712 (AASGEERPPTTKRKPATKRPSKKKEASEGPEK) and 785–854 (VTSA…TGNP). Residues 690–702 (TTKRKPATKRPSK) show a composition bias toward basic residues. The span at 794–804 (HQLPHQQPQQQ) shows a compositional bias: low complexity. Positions 812 to 824 (LLNEQDESADDDG) are enriched in acidic residues. Low complexity predominate over residues 827-851 (RSSSGTVSNSTTTTTTATTTSSKST). The C2H2-type 3; degenerate zinc finger occupies 856–875 (FTCEHCARQLCSMSNLKRHR). Disordered regions lie at residues 882–905 (ASSSSNSAASRPPSQPSTPATAPA), 975–1069 (GDAL…EHKN), 1083–1227 (RMDA…SPLD), and 1246–1273 (PGPLEQGQSSVDSQSTAEPSPRKASQQA). 3 stretches are compositionally biased toward low complexity: residues 981 to 1015 (QQHQQKMDQQIQIQFQQQQQQRFQHHQQQQQAGRI), 1023 to 1046 (ILNQVQNPPQQVQHNQHQNQMLNP), and 1108 to 1131 (PQRSQAPAPSRQQQQQPPVAYQVQ). Pro residues predominate over residues 1136–1146 (PLPPMQLPPLQ). Positions 1147–1185 (NPHNQQQQHQMLHQSQMNYQQVQQVQQVQHVQQQQNLQN) are enriched in low complexity. Polar residues-rich tracts occupy residues 1201–1211 (APGNRSRSHSN) and 1251–1273 (QGQSSVDSQSTAEPSPRKASQQA). Residues 1274-1297 (YICPECKKTYASRKNVKRHRMAVH) form a C2H2-type 4 zinc finger. 4 disordered regions span residues 1333–1478 (TPDS…ADEE), 1569–1608 (SVGLPSLASPGEQFGYQQYSQHPQQHPQQHPQQHPQQQQQ), 1624–1671 (HPPM…LTCS), and 1769–1822 (ADRQ…PSTN). Over residues 1388–1403 (ERQEPPKKPVADDHKS) the composition is skewed to basic and acidic residues. 2 stretches are compositionally biased toward pro residues: residues 1407-1421 (PLPPANTIMPPPPPY) and 1429-1445 (LNPPRTALPPLQLPPLQ). Over residues 1589–1608 (QHPQQHPQQHPQQHPQQQQQ) the composition is skewed to low complexity. A compositionally biased stretch (polar residues) spans 1624–1633 (HPPMPVSQQF). The segment at 1668–1694 (LTCSGCKKILGSDYSLRRHRAGCADVQ) adopts a C2H2-type 5; degenerate zinc-finger fold. Residues 1800 to 1811 (SSSSSSSTSSAS) are compositionally biased toward low complexity. A C2H2-type 6 zinc finger spans residues 1826–1858 (HYCQFPECGKNFSSEWNLARHTRESCKMTTRAH).

As to expression, expressed in seam cells, intestine cells, pharyngeal muscles and nerve ring neurons.

It is found in the nucleus. Its subcellular location is the cytoplasm. In terms of biological role, RNA-binding protein, which regulates the expression of proteins required to control developmental timing of events during the L2 to L3 larval stage switch. Binds to the 3'UTR of the transcript of the heterochronic protein lin-28 to post-transcriptionally negatively regulate its expression in certain tissue types in the later larval stages. During larval development, controls the timing of seam cell division and terminal differentiation into adult alae. In vitro, it can also bind to DNA through its first zinc finger. May bind directly or indirectly to the promoter of the sex-determining factor xol-1 to activate its transcription. Its activation of xol-1 transcription controls sex determination and X chromosome dosage compensation to promote male development. Through the negative regulation of lin-28 transcript, it also has a role in the fox-1-sex-1-mediated determination of sexual fate. Acts in the intestine to play a role in regulating adult lifespan. The chain is Signal element on autosome protein 2 from Caenorhabditis elegans.